Consider the following 910-residue polypeptide: Disease susceptibility protein LOV1 (910 aa).

Residues 22–60 are a coiled coil; it reads ARLNGIGEQVDGLKRQLGRLQSLLKDADAKKHESERVRN. The region spanning 169-461 is the NB-ARC domain; it reads EQSVEALAGH…AAEGIITSSD (293 aa). 6 LRR repeats span residues 584–609, 610–632, 634–655, 700–725, 726–751, and 847–871; these read LPLLRVLDLSRVKFEGGKLPSSIGDL, IHLRFLSLHRAWISHLPSSLRNL, LLLYLNLGFNGMVHVPNVLKEM, MTKLRELSLFITDGSSDTLSSSLGQL, RSLEVLHLYDRQEPRVAYHGGEIVLN, and MPLLRALTICNCRKLKLPGGINYIT.

The protein belongs to the disease resistance NB-LRR family. RPP8/HRT subfamily.

Its function is as follows. Confers susceptibility to the fungus Cochliobolus victoriae by conditioning victorin-dependent (victorin is a toxin synthesized by C.victoriae) induction of defense-associated proteins. The chain is Disease susceptibility protein LOV1 (LOV1) from Arabidopsis thaliana (Mouse-ear cress).